Reading from the N-terminus, the 1065-residue chain is MRKQEVRTGREAGQGHGTGSPAEQVKALMDLLAGKGSQGSQAPQALDRTPDAPLGPCSNDSRIQRHRKALLSKVGGGPELGGPWHRLASLLLVEGLTDLQLREHDFTQVEATRGGGHPARTVALDRLFLPLSRVSVPPRVSITIGVAGMGKTTLVRHFVRLWAHGQVGKDFSLVLPLTFRDLNTHEKLCADRLICSVFPHVGEPSLAVAVPARALLILDGLDECRTPLDFSNTVACTDPKKEIPVDHLITNIIRGNLFPEVSIWITSRPSASGQIPGGLVDRMTEIRGFNEEEIKVCLEQMFPEDQALLGWMLSQVQADRALYLMCTVPAFCRLTGMALGHLWRSRTGPQDAELWPPRTLCELYSWYFRMALSGEGQEKGKASPRIEQVAHGGRKMVGTLGRLAFHGLLKKKYVFYEQDMKAFGVDLALLQGAPCSCFLQREETLASSVAYCFTHLSLQEFVAAAYYYGASRRAIFDLFTESGVSWPRLGFLTHFRSAAQRAMQAEDGRLDVFLRFLSGLLSPRVNALLAGSLLAQGEHQAYRTQVAELLQGCLRPDAAVCARAINVLHCLHELQHTELARSVEEAMESGALARLTGPAHRAALAYLLQVSDACAQEANLSLSLSQGVLQSLLPQLLYCRKLRLDTNQFQDPVMELLGSVLSGKDCRIQKISLAENQISNKGAKALARSLLVNRSLTSLDLRGNSIGPQGAKALADALKINRTLTSLSLQGNTVRDDGARSMAEALASNRTLSMLHLQKNSIGPMGAQRMADALKQNRSLKELMFSSNSIGDGGAKALAEALKVNQGLESLDLQSNSISDAGVAALMGALCTNQTLLSLSLRENSISPEGAQAIAHALCANSTLKNLDLTANLLHDQGARAIAVAVRENRTLTSLHLQWNFIQAGAAQALGQALQLNRSLTSLDLQENAIGDDGACAVARALKVNTALTALYLQVASIGASGAQVLGEALAVNRTLEILDLRGNAIGVAGAKALANALKVNSSLRRLNLQENSLGMDGAICIATALSGNHRLQHINLQGNHIGDSGARMISEAIKTNAPTCTVEM.

A compositionally biased stretch (basic and acidic residues) spans 1–10; the sequence is MRKQEVRTGR. Residues 1–62 are disordered; the sequence is MRKQEVRTGR…PLGPCSNDSR (62 aa). The region spanning 139 to 460 is the NACHT domain; the sequence is RVSITIGVAG…YCFTHLSLQE (322 aa). 145–152 is a binding site for ATP; sequence GVAGMGKT. The short motif at 457–460 is the TRAF6-binding element; sequence SLQE. 16 LRR repeats span residues 617 to 639, 641 to 663, 665 to 688, 693 to 716, 721 to 744, 749 to 772, 777 to 800, 805 to 828, 833 to 856, 861 to 884, 889 to 912, 917 to 940, 945 to 968, 973 to 996, 1001 to 1029, and 1031 to 1052; these read EANLSLSLSQGVLQSLLPQLLYC, KLRLDTNQFQDPVMELLGSVLSG, DCRIQKISLAENQISNKGAKALAR, NRSLTSLDLRGNSIGPQGAKALAD, NRTLTSLSLQGNTVRDDGARSMAE, NRTLSMLHLQKNSIGPMGAQRMAD, NRSLKELMFSSNSIGDGGAKALAE, NQGLESLDLQSNSISDAGVAALMG, NQTLLSLSLRENSISPEGAQAIAH, NSTLKNLDLTANLLHDQGARAIAV, NRTLTSLHLQWNFIQAGAAQALGQ, NRSLTSLDLQENAIGDDGACAVAR, NTALTALYLQVASIGASGAQVLGE, NRTLEILDLRGNAIGVAGAKALAN, NSSLRRLNLQENSLGMDGAICIATALSGN, and RLQHINLQGNHIGDSGARMISE.

Belongs to the NLRP family. As to quaternary structure, directly interacts (via CARD) with TMEM173/STING; this interaction reduces TMEM173 trafficking to the perinuclear region in response to interferon stimulatory DNA. Also interacts, but to a lesser extent, with TBK1. Interacts with TRAF6; this interaction results in decreased TRAF6 'Lys-63'-linked polyubiquitination, but leaves 'Lys-48'-linked chains unchanged, promoting TRAF6 protein degradation. Interacts with PIK3R1/PIK3R2; this interaction disrupts the association between PIK3R1/PIK3R2 and the p110 catalytic subunit PIK3CA/PIK3CB/PIK3CD and reduces PIK3R1/PIK3R2 activation. Weakly interacts with PYCARD/ASC. Interacts with CASP1 and CASP5.

It is found in the cytoplasm. Its function is as follows. Negative regulator of the innate immune response. Attenuates signaling pathways activated by Toll-like receptors (TLRs) and the DNA sensor STING/TMEM173 in response to pathogen-associated molecular patterns, such as intracellular poly(dA:dT), but not poly(I:C), or in response to DNA virus infection, including that of Herpes simplex virus 1 (HSV1). May affect TLR4 signaling by acting at the level of TRAF6 ubiquitination, decreasing the activating 'Lys-63'-linked ubiquitination and leaving unchanged the degradative 'Lys-48'-linked ubiquitination. Inhibits the PI3K-AKT-mTOR pathway possibly by directly interacting with the posphatidylinositol 3-kinase regulatory subunit p85 (PIK3R1/PIK3R2) and disrupting the association between PIK3R1/PIK3R2 and the catalytic subunit p110 (PIK3CA/PIK3CB/PIK3CD) and reducing PIK3R1/PIK3R2 activation. Via its regulation of the PI3K-AKT-mTOR pathway, controls cell proliferation, predominantly in intestinal epithelial cells. May also affect NOD1- or NOD2-mediated NF-kappa-B activation. Might also affect the inflammatory response by preventing NLRP3 inflammasome formation, CASP1 cleavage and IL1B maturation. This chain is NLR family CARD domain-containing protein 3 (NLRC3), found in Homo sapiens (Human).